Consider the following 201-residue polypeptide: FMN-dependent NADH:quinone oxidoreductase (201 aa).

FMN-binding positions include serine 9, 16 to 18 (SVS), and 93 to 96 (MYNF).

The protein belongs to the azoreductase type 1 family. As to quaternary structure, homodimer. Requires FMN as cofactor.

It catalyses the reaction 2 a quinone + NADH + H(+) = 2 a 1,4-benzosemiquinone + NAD(+). The catalysed reaction is N,N-dimethyl-1,4-phenylenediamine + anthranilate + 2 NAD(+) = 2-(4-dimethylaminophenyl)diazenylbenzoate + 2 NADH + 2 H(+). Quinone reductase that provides resistance to thiol-specific stress caused by electrophilic quinones. Functionally, also exhibits azoreductase activity. Catalyzes the reductive cleavage of the azo bond in aromatic azo compounds to the corresponding amines. This is FMN-dependent NADH:quinone oxidoreductase from Gluconacetobacter diazotrophicus (strain ATCC 49037 / DSM 5601 / CCUG 37298 / CIP 103539 / LMG 7603 / PAl5).